The chain runs to 418 residues: Deubiquitinase and deneddylase Dub1 (418 aa).

The span at 1–10 (MLSPTNSISK) shows a compositional bias: polar residues. Positions 1 to 23 (MLSPTNSISKTAPVPPQDSSKPV) are disordered. The chain crosses the membrane as a helical span at residues 40–60 (TALAVLLVVVTLGLILLFYSF). Residues 72–144 (TRPSTKEQPT…PLPPKAPKPV (73 aa)) are disordered. Positions 86–141 (VPLPSPPLAVPRPSTPPPPVISRPSTPPAPTPAISPPSTPSAPKPSTPPPLPPKAP) are enriched in pro residues. Active-site residues include histidine 288, aspartate 305, and cysteine 358.

This sequence belongs to the peptidase C48 family.

The protein resides in the secreted. Its subcellular location is the host cell. The protein localises to the membrane. Effector proteins function to alter host cell physiology and promote bacterial survival in host tissues. This protease possesses deubiquitinating and deneddylating activities. This is Deubiquitinase and deneddylase Dub1 (cdu1) from Chlamydia trachomatis serovar B (strain Jali20/OT).